Reading from the N-terminus, the 148-residue chain is 3-dehydroquinate dehydratase (148 aa).

Catalysis depends on tyrosine 23, which acts as the Proton acceptor. Residues asparagine 75, histidine 81, and aspartate 88 each contribute to the substrate site. Histidine 101 acts as the Proton donor in catalysis. Substrate is bound by residues 102–103 (LS) and arginine 112.

The protein belongs to the type-II 3-dehydroquinase family. As to quaternary structure, homododecamer.

It catalyses the reaction 3-dehydroquinate = 3-dehydroshikimate + H2O. The protein operates within metabolic intermediate biosynthesis; chorismate biosynthesis; chorismate from D-erythrose 4-phosphate and phosphoenolpyruvate: step 3/7. Functionally, catalyzes a trans-dehydration via an enolate intermediate. This is 3-dehydroquinate dehydratase from Ectopseudomonas mendocina (strain ymp) (Pseudomonas mendocina).